The sequence spans 215 residues: Sodium channel regulatory subunit beta-3 (215 aa).

The N-terminal stretch at 1 to 24 (MPAFNRLLPLASLVLIYWVRVCFP) is a signal peptide. The Ig-like C2-type domain maps to 25–138 (VCVEVPSETE…EAHRPFVKTT (114 aa)). The Extracellular segment spans residues 25–156 (VCVEVPSETE…EEAGEDFTSV (132 aa)). 2 cysteine pairs are disulfide-bonded: Cys-26–Cys-48 and Cys-45–Cys-120. Residues Asn-95, Asn-109, Asn-113, and Asn-121 are each glycosylated (N-linked (GlcNAc...) asparagine). Residues 157-178 (VSEIMMYILLVFLTLWLFIEMI) traverse the membrane as a helical segment. Over 179 to 215 (YCYRKVSKAEEAAQENASDYLAIPSENKENSVVPVEE) the chain is Cytoplasmic.

Belongs to the sodium channel auxiliary subunit SCN3B (TC 8.A.17) family. As to quaternary structure, a voltage-gated sodium (Nav) channel consists of an ion-conducting pore-forming alpha subunit functional on its own that is regulated by one or more beta subunits. Forms homodimers and homotrimers. SCN3B is non-covalently associated with alpha subunits and induces the formation of alpha subunit oligomers, including trimers. Interacts with SCN5A/Nav1.5; regulatory subunit of SCN5A/Nav1.5. Interacts with SCN7A/Nav2.1; probable regulatory subunit of SCN7A/Nav2.1. Interacts with SCN10A; regulatory subunit of SCN10A/Nav1.8. Interacts with NFASC; probably involved in targeting the sodium channels to the nodes of Ranvier. Intramolecular disulfide bonds favor the voltage-gated sodium channel oligomeric complex assembly. In terms of processing, N-glycosylated.

The protein localises to the cell membrane. Its function is as follows. Regulatory subunit of multiple voltage-gated sodium (Nav) channels directly mediating the depolarization of excitable membranes. Navs, also called VGSCs (voltage-gated sodium channels) or VDSCs (voltage-dependent sodium channels), operate by switching between closed and open conformations depending on the voltage difference across the membrane. In the open conformation they allow Na(+) ions to selectively pass through the pore, along their electrochemical gradient. The influx of Na+ ions provokes membrane depolarization, initiating the propagation of electrical signals throughout cells and tissues. The accessory beta subunits participate in localization and functional modulation of the Nav channels. Modulates the activity of SCN2A/Nav1.2, causing a hyperpolarizing shift in the voltage-dependence of inactivation of the channel and increasing the fraction of channels operating in the fast gating mode. Modulates the activity of SCN5A/Nav1.5. Could also regulate the atypical sodium channel SCN7A/Nav2.1. Modulates the activity of SCN10A/Nav1.8, regulating its oligomerization and accelerating the recovery from inactivation. The protein is Sodium channel regulatory subunit beta-3 of Mus musculus (Mouse).